The sequence spans 155 residues: Small ribosomal subunit protein uS7 (155 aa).

The protein belongs to the universal ribosomal protein uS7 family. As to quaternary structure, part of the 30S ribosomal subunit. Contacts proteins S9 and S11.

Functionally, one of the primary rRNA binding proteins, it binds directly to 16S rRNA where it nucleates assembly of the head domain of the 30S subunit. Is located at the subunit interface close to the decoding center, probably blocks exit of the E-site tRNA. The chain is Small ribosomal subunit protein uS7 from Sulfurovum sp. (strain NBC37-1).